The following is a 339-amino-acid chain: Nitrilase 2 (339 aa).

N-acetylserine is present on serine 2. Residues 18 to 290 (VRATIVQAST…EGLITADLDL (273 aa)) enclose the CN hydrolase domain. Residue glutamate 58 is the Proton acceptor of the active site. Lysine 145 functions as the Proton donor in the catalytic mechanism. The Nucleophile role is filled by cysteine 179.

It belongs to the carbon-nitrogen hydrolase superfamily. Nitrilase family.

Its subcellular location is the cell membrane. It carries out the reaction a nitrile + 2 H2O = a carboxylate + NH4(+). Its function is as follows. Can convert indole-3-acetonitrile to the plant hormone indole-3-acetic acid. This chain is Nitrilase 2 (NIT2), found in Arabidopsis thaliana (Mouse-ear cress).